The primary structure comprises 185 residues: Cuticle protein 18.6, isoform B (185 aa).

6 repeat units span residues 21 to 24 (AAPA), 33 to 36 (AAPV), 41 to 44 (AAPV), 133 to 136 (AAPV), 139 to 142 (AAPV), and 150 to 153 (AAPV). In terms of domain architecture, Chitin-binding type R&amp;R spans 64–134 (HPQYSFAYNV…KEAGAHPAAA (71 aa)).

Component of the cuticle of migratory locust which contains more than 100 different structural proteins. The sequence is that of Cuticle protein 18.6, isoform B from Locusta migratoria (Migratory locust).